A 501-amino-acid polypeptide reads, in one-letter code: Aspartyl/glutamyl-tRNA(Asn/Gln) amidotransferase subunit B (501 aa).

The segment at 276 to 299 is disordered; that stretch reads HYQEADGSTSKGRPKETAEDYRYF. The segment covering 288-299 has biased composition (basic and acidic residues); that stretch reads RPKETAEDYRYF.

The protein belongs to the GatB/GatE family. GatB subfamily. Heterotrimer of A, B and C subunits.

It carries out the reaction L-glutamyl-tRNA(Gln) + L-glutamine + ATP + H2O = L-glutaminyl-tRNA(Gln) + L-glutamate + ADP + phosphate + H(+). The catalysed reaction is L-aspartyl-tRNA(Asn) + L-glutamine + ATP + H2O = L-asparaginyl-tRNA(Asn) + L-glutamate + ADP + phosphate + 2 H(+). Its function is as follows. Allows the formation of correctly charged Asn-tRNA(Asn) or Gln-tRNA(Gln) through the transamidation of misacylated Asp-tRNA(Asn) or Glu-tRNA(Gln) in organisms which lack either or both of asparaginyl-tRNA or glutaminyl-tRNA synthetases. The reaction takes place in the presence of glutamine and ATP through an activated phospho-Asp-tRNA(Asn) or phospho-Glu-tRNA(Gln). In Corynebacterium glutamicum (strain R), this protein is Aspartyl/glutamyl-tRNA(Asn/Gln) amidotransferase subunit B.